The sequence spans 318 residues: Gamma-glutamyl hydrolase (318 aa).

Positions 1–24 (MASPGCLLCVLGLLLCGAASLELS) are cleaved as a signal peptide. The Gamma-glutamyl hydrolase domain maps to 25-318 (RPHGDTAKKP…SSFQQCYIFD (294 aa)). N-linked (GlcNAc...) asparagine glycosylation occurs at asparagine 116. Cysteine 134 acts as the Nucleophile in catalysis. N-linked (GlcNAc...) asparagine glycosylation is found at asparagine 163 and asparagine 203. Residue histidine 244 is the Proton donor of the active site. N-linked (GlcNAc...) asparagine; partial glycosylation is present at asparagine 307.

It belongs to the peptidase C26 family. Homodimer.

Its subcellular location is the secreted. The protein resides in the extracellular space. It localises to the lysosome. The protein localises to the melanosome. The catalysed reaction is (6S)-5,6,7,8-tetrahydrofolyl-(gamma-L-Glu)(n) + (n-1) H2O = (6S)-5,6,7,8-tetrahydrofolate + (n-1) L-glutamate. Hydrolyzes the polyglutamate sidechains of pteroylpolyglutamates. Progressively removes gamma-glutamyl residues from pteroylpoly-gamma-glutamate to yield pteroyl-alpha-glutamate (folic acid) and free glutamate. May play an important role in the bioavailability of dietary pteroylpolyglutamates and in the metabolism of pteroylpolyglutamates and antifolates. This Homo sapiens (Human) protein is Gamma-glutamyl hydrolase.